Here is a 139-residue protein sequence, read N- to C-terminus: Small ribosomal subunit protein uS12m (139 aa).

Residues 1 to 21 form a disordered region; it reads MLSTLYQNDLKKKRNRRRNRS. Positions 11–20 are enriched in basic residues; the sequence is KKKRNRRRNR.

Belongs to the universal ribosomal protein uS12 family.

The protein resides in the mitochondrion. Protein S12 is involved in the translation initiation step. In Paramecium tetraurelia, this protein is Small ribosomal subunit protein uS12m (RPS12).